A 264-amino-acid chain; its full sequence is MSIVRSDKPFVLAGRTYQSRLLVGTGKYRDMEETRLAIEASGAEIVTFAVRRTNLGQIEGEPNLLEVLSPDRYTFLPNTAGCYDAIEAVRTCRLARELLDGHNLVKLEVLADQKTLFPNVIETLKAAETLVKEGFDVMVYTSDDPIIARQLAEIGCIAVMPLAGLIGSGLGICNPYNLQIILEEAKIPVLVDAGVGTASDATIAMELGCDAVLMNSAIAHAQQPIMMAEAMNHAIVAGRLAYLAGRMPKKLYASASSPLDGLIK.

The active-site Schiff-base intermediate with DXP is lysine 106. 1-deoxy-D-xylulose 5-phosphate contacts are provided by residues glycine 167, 193 to 194 (AG), and 215 to 216 (NS).

It belongs to the ThiG family. As to quaternary structure, homotetramer. Forms heterodimers with either ThiH or ThiS.

The protein localises to the cytoplasm. The catalysed reaction is [ThiS sulfur-carrier protein]-C-terminal-Gly-aminoethanethioate + 2-iminoacetate + 1-deoxy-D-xylulose 5-phosphate = [ThiS sulfur-carrier protein]-C-terminal Gly-Gly + 2-[(2R,5Z)-2-carboxy-4-methylthiazol-5(2H)-ylidene]ethyl phosphate + 2 H2O + H(+). Its pathway is cofactor biosynthesis; thiamine diphosphate biosynthesis. Its function is as follows. Catalyzes the rearrangement of 1-deoxy-D-xylulose 5-phosphate (DXP) to produce the thiazole phosphate moiety of thiamine. Sulfur is provided by the thiocarboxylate moiety of the carrier protein ThiS. In vitro, sulfur can be provided by H(2)S. In Pseudomonas fluorescens (strain SBW25), this protein is Thiazole synthase.